The chain runs to 746 residues: Histone-lysine N-methyltransferase EZH2 (746 aa).

Residues 1-340 are interaction with DNMT1, DNMT3A and DNMT3B; it reads MGQTGKKSEK…AKEFAAALTA (340 aa). A Phosphoserine; by PKB/AKT1 modification is found at S21. The interval 39–68 is interaction with EED; sequence KTMFSSNRQKILERTETLNQEWKQRRIQPV. Residue S75 is glycosylated (O-linked (GlcNAc) serine). Position 76 is a phosphoserine (S76). The segment at 180-217 is disordered; it reads QYNDDDDDDDGDDPDEREEKQKDLEDNRDDKETCPPRK. Residues 182–195 are compositionally biased toward acidic residues; it reads NDDDDDDDGDDPDE. Residues 196 to 217 are compositionally biased toward basic and acidic residues; it reads REEKQKDLEDNRDDKETCPPRK. The segment at 329–522 is interaction with CDYL; the sequence is EGAKEFAAAL…SSNHVYNYQP (194 aa). T339 bears the Phosphothreonine mark. Positions 340–426 are disordered; that stretch reads AERIKTPPKR…PIKMKPNIEP (87 aa). T345 carries the post-translational modification Phosphothreonine; by CDK1 and CDK2. A compositionally biased stretch (basic residues) spans 345–357; the sequence is TPPKRPGGRRRGR. Phosphoserine is present on residues S363 and S366. T367 carries the phosphothreonine modification. A compositionally biased stretch (basic and acidic residues) spans 374-385; the sequence is ESKDTDSDREAG. T487 is subject to Phosphothreonine. The region spanning 503–605 is the CXC domain; it reads CRKIQLKKDG…SKNVSCKNCS (103 aa). One can recognise an SET domain in the interval 612–727; that stretch reads KHLLLAPSDV…TGEELFFDYR (116 aa). K634 is covalently cross-linked (Glycyl lysine isopeptide (Lys-Gly) (interchain with G-Cter in SUMO2)).

This sequence belongs to the class V-like SAM-binding methyltransferase superfamily. Histone-lysine methyltransferase family. EZ subfamily. Component of the PRC2/EED-EZH2 complex, which includes EED, EZH2, SUZ12, RBBP4 and RBBP7 and possibly AEBP2. The minimum components required for methyltransferase activity of the PRC2/EED-EZH2 complex are EED, EZH2 and SUZ12. The PRC2 complex may also interact with DNMT1, DNMT3A, DNMT3B and PHF1 via the EZH2 subunit and with SIRT1 via the SUZ12 subunit. Interacts with HDAC1 and HDAC2. Binds ATRX via the SET domain. Interacts with PRAME. Interacts with CDYL. Interacts with EED. Interacts with BMAL1. Interacts with CLOCK and CRY1. Interacts with DNMT3L; the interaction is direct. Interacts with EZHIP; the interaction blocks EZH2 methyltransferase activity. Interacts with ZNF263; recruited to the SIX3 promoter along with other proteins involved in chromatin modification and transcriptional corepression where it contributes to transcriptional repression. Interacts with ARMC12. Interacts with ZMYND8; the interaction is dependent on the presence of chromatin. Interacts with DDX18; this interaction inhibits the PRC2 complex. Phosphorylated by AKT1. Phosphorylation by AKT1 reduces methyltransferase activity. Phosphorylation at Thr-345 by CDK1 and CDK2 promotes maintenance of H3K27me3 levels at EZH2-target loci, thus leading to epigenetic gene silencing. In terms of processing, sumoylated. Post-translationally, glycosylated: O-GlcNAcylation at Ser-75 by OGT increases stability of EZH2 and facilitates the formation of H3K27me3 by the PRC2/EED-EZH2 complex. In terms of tissue distribution, present in actively dividing cells. Widely expressed in early embryos. In later embryogenesis, expression restricted to central and peripheral nervous system, liver and thymus. In adult, highest expression in spleen, testis and placenta. Lower levels in intestine, muscle and ovary and very low levels in brain and liver. No expression in heart, thyroid gland, lung and kidney.

The protein localises to the nucleus. Its subcellular location is the chromosome. It carries out the reaction L-lysyl(27)-[histone H3] + 3 S-adenosyl-L-methionine = N(6),N(6),N(6)-trimethyl-L-lysyl(27)-[histone H3] + 3 S-adenosyl-L-homocysteine + 3 H(+). Its function is as follows. Polycomb group (PcG) protein. Catalytic subunit of the PRC2/EED-EZH2 complex, which methylates (H3K9me) and 'Lys-27' (H3K27me) of histone H3, leading to transcriptional repression of the affected target gene. Able to mono-, di- and trimethylate 'Lys-27' of histone H3 to form H3K27me1, H3K27me2 and H3K27me3, respectively. Displays a preference for substrates with less methylation, loses activity when progressively more methyl groups are incorporated into H3K27, H3K27me0 &gt; H3K27me1 &gt; H3K27me2. Compared to EZH1-containing complexes, it is more abundant in embryonic stem cells and plays a major role in forming H3K27me3, which is required for embryonic stem cell identity and proper differentiation. The PRC2/EED-EZH2 complex may also serve as a recruiting platform for DNA methyltransferases, thereby linking two epigenetic repression systems. Genes repressed by the PRC2/EED-EZH2 complex include HOXA7, HOXB6 and HOXC8. EZH2 can also methylate non-histone proteins such as the transcription factor GATA4 and the nuclear receptor RORA. Regulates the circadian clock via histone methylation at the promoter of the circadian genes. Essential for the CRY1/2-mediated repression of the transcriptional activation of PER1/2 by the CLOCK-BMAL1 heterodimer; involved in the di and trimethylation of 'Lys-27' of histone H3 on PER1/2 promoters which is necessary for the CRY1/2 proteins to inhibit transcription. This Mus musculus (Mouse) protein is Histone-lysine N-methyltransferase EZH2.